The sequence spans 268 residues: Energy-coupling factor transporter transmembrane protein EcfT (268 aa).

Transmembrane regions (helical) follow at residues Val29–Val49, Ile75–Val95, Leu107–Leu127, Leu152–Ile172, and Trp242–Ala262.

This sequence belongs to the energy-coupling factor EcfT family. In terms of assembly, forms a stable energy-coupling factor (ECF) transporter complex composed of 2 membrane-embedded substrate-binding proteins (S component), 2 ATP-binding proteins (A component) and 2 transmembrane proteins (T component). May be able to interact with more than 1 S component at a time.

It localises to the cell membrane. Functionally, transmembrane (T) component of an energy-coupling factor (ECF) ABC-transporter complex. Unlike classic ABC transporters this ECF transporter provides the energy necessary to transport a number of different substrates. The sequence is that of Energy-coupling factor transporter transmembrane protein EcfT from Bacillus selenitireducens (strain ATCC 700615 / DSM 15326 / MLS10).